A 288-amino-acid polypeptide reads, in one-letter code: HTH-type transcriptional regulator CzcR (288 aa).

In terms of domain architecture, HTH lysR-type spans 1 to 58 (MELRDLQIFKCVAHHKSITGAAKELNYVQSNVTARIKQLENELKTPLFNRHKKGVSLS). Residues 18–37 (ITGAAKELNYVQSNVTARIK) constitute a DNA-binding region (H-T-H motif).

The protein belongs to the LysR transcriptional regulatory family.

The sequence is that of HTH-type transcriptional regulator CzcR (czcR) from Bacillus subtilis (strain 168).